The sequence spans 92 residues: Elongation factor 1-beta (92 aa).

Belongs to the EF-1-beta/EF-1-delta family.

Functionally, promotes the exchange of GDP for GTP in EF-1-alpha/GDP, thus allowing the regeneration of EF-1-alpha/GTP that could then be used to form the ternary complex EF-1-alpha/GTP/AAtRNA. This chain is Elongation factor 1-beta, found in Pyrobaculum calidifontis (strain DSM 21063 / JCM 11548 / VA1).